A 56-amino-acid chain; its full sequence is Large ribosomal subunit protein bL33 (56 aa).

Belongs to the bacterial ribosomal protein bL33 family.

The protein is Large ribosomal subunit protein bL33 of Nocardioides sp. (strain ATCC BAA-499 / JS614).